The chain runs to 397 residues: Phosphoglycerate kinase (397 aa).

Substrate-binding positions include 25–27 (DLN), arginine 41, 64–67 (HLGR), arginine 118, and arginine 151. ATP-binding positions include lysine 202, glutamate 324, and 350-353 (GGDT).

It belongs to the phosphoglycerate kinase family. As to quaternary structure, monomer.

It localises to the cytoplasm. It carries out the reaction (2R)-3-phosphoglycerate + ATP = (2R)-3-phospho-glyceroyl phosphate + ADP. It functions in the pathway carbohydrate degradation; glycolysis; pyruvate from D-glyceraldehyde 3-phosphate: step 2/5. The polypeptide is Phosphoglycerate kinase (Leptothrix cholodnii (strain ATCC 51168 / LMG 8142 / SP-6) (Leptothrix discophora (strain SP-6))).